The sequence spans 225 residues: Holliday junction branch migration complex subunit RuvA (225 aa).

The segment at 1–71 is domain I; sequence MISWISGELV…EDSDLLFGFS (71 aa). The interval 72-150 is domain II; the sequence is SKDQKNFFIE…NELKIQEEKS (79 aa). The flexible linker stretch occupies residues 151 to 161; it reads KDEFHIKDNKI. The domain III stretch occupies residues 161 to 225; the sequence is INKIVSDIEL…LDNDSSNIVR (65 aa).

Belongs to the RuvA family. As to quaternary structure, homotetramer. Forms an RuvA(8)-RuvB(12)-Holliday junction (HJ) complex. HJ DNA is sandwiched between 2 RuvA tetramers; dsDNA enters through RuvA and exits via RuvB. An RuvB hexamer assembles on each DNA strand where it exits the tetramer. Each RuvB hexamer is contacted by two RuvA subunits (via domain III) on 2 adjacent RuvB subunits; this complex drives branch migration. In the full resolvosome a probable DNA-RuvA(4)-RuvB(12)-RuvC(2) complex forms which resolves the HJ.

Its subcellular location is the cytoplasm. The RuvA-RuvB-RuvC complex processes Holliday junction (HJ) DNA during genetic recombination and DNA repair, while the RuvA-RuvB complex plays an important role in the rescue of blocked DNA replication forks via replication fork reversal (RFR). RuvA specifically binds to HJ cruciform DNA, conferring on it an open structure. The RuvB hexamer acts as an ATP-dependent pump, pulling dsDNA into and through the RuvAB complex. HJ branch migration allows RuvC to scan DNA until it finds its consensus sequence, where it cleaves and resolves the cruciform DNA. The sequence is that of Holliday junction branch migration complex subunit RuvA from Prochlorococcus marinus (strain MIT 9312).